Here is a 185-residue protein sequence, read N- to C-terminus: UPF0149 protein PFL_5969 (185 aa).

The protein belongs to the UPF0149 family.

In Pseudomonas fluorescens (strain ATCC BAA-477 / NRRL B-23932 / Pf-5), this protein is UPF0149 protein PFL_5969.